The chain runs to 374 residues: Ribosomal RNA large subunit methyltransferase G (374 aa).

It belongs to the methyltransferase superfamily. RlmG family.

The protein resides in the cytoplasm. It carries out the reaction guanosine(1835) in 23S rRNA + S-adenosyl-L-methionine = N(2)-methylguanosine(1835) in 23S rRNA + S-adenosyl-L-homocysteine + H(+). Functionally, specifically methylates the guanine in position 1835 (m2G1835) of 23S rRNA. This Ectopseudomonas mendocina (strain ymp) (Pseudomonas mendocina) protein is Ribosomal RNA large subunit methyltransferase G.